A 240-amino-acid polypeptide reads, in one-letter code: Poxin (240 aa).

The active-site Proton donor is His-46. The active-site Shared with catalytic histidine of dimeric partner is Tyr-181. Catalysis depends on Lys-185, which acts as the Proton acceptor; shared with catalytic histidine of dimeric partner.

Belongs to the poxin family. As to quaternary structure, homodimer.

It catalyses the reaction 2',3'-cGAMP + H2O = Gp(2'-5')Ap(3') + H(+). Its function is as follows. Nuclease that cleaves host 2',3'-cGAMP. This is Poxin (p26) from Bombyx mori (Silk moth).